The following is a 267-amino-acid chain: Undecaprenyl-diphosphatase (267 aa).

Transmembrane regions (helical) follow at residues 1 to 21 (MPLL…FLPV), 40 to 60 (GQAI…LFFW), 85 to 105 (LALG…FLYF), 112 to 132 (LRSV…LYIA), 188 to 208 (IAML…GTEV), 219 to 239 (DMGI…ALMM), and 245 to 265 (VSFT…LFIA).

The protein belongs to the UppP family.

The protein resides in the cell inner membrane. The enzyme catalyses di-trans,octa-cis-undecaprenyl diphosphate + H2O = di-trans,octa-cis-undecaprenyl phosphate + phosphate + H(+). Functionally, catalyzes the dephosphorylation of undecaprenyl diphosphate (UPP). Confers resistance to bacitracin. The protein is Undecaprenyl-diphosphatase of Ruegeria sp. (strain TM1040) (Silicibacter sp.).